The following is a 458-amino-acid chain: Plant UBX domain-containing protein 2 (458 aa).

Residues 1–103 (MDDVKDKLKG…APQDGFDPYG (103 aa)) form a disordered region. Polar residues predominate over residues 44–54 (PIQNRFNSSQA). Pro residues predominate over residues 56-70 (NPTPRPKPNPNPLPE). Residues 74–85 (SSSDQKISGSTR) show a composition bias toward polar residues. The C2H2-type; atypical zinc finger occupies 121–143 (FECPICKNPFTSEEEVSVHVESC). Residues 181–248 (SSIDVLLRLF…EIWAVMDVPS (68 aa)) form the PUB domain. One can recognise a UBX domain in the interval 349–433 (KRYKRSMIRV…ELVPSALIRF (85 aa)).

In terms of assembly, interacts with CDC48A in vitro and co-fractionates with membrane-associated but not soluble CDC48A in vivo.

It localises to the membrane. Facilitates the interaction of SYP31 and CDC48A, thereby regulating an CDC48A membrane-associated function. Appears to act as a negative regulator mediating the powdery mildew-plant interaction. The polypeptide is Plant UBX domain-containing protein 2 (Arabidopsis thaliana (Mouse-ear cress)).